We begin with the raw amino-acid sequence, 138 residues long: Ribosome-binding factor A (138 aa).

The tract at residues Glu112–Glu138 is disordered. A compositionally biased stretch (low complexity) spans Glu119–Ala131.

Belongs to the RbfA family. In terms of assembly, monomer. Binds 30S ribosomal subunits, but not 50S ribosomal subunits or 70S ribosomes.

Its subcellular location is the cytoplasm. Its function is as follows. One of several proteins that assist in the late maturation steps of the functional core of the 30S ribosomal subunit. Associates with free 30S ribosomal subunits (but not with 30S subunits that are part of 70S ribosomes or polysomes). Required for efficient processing of 16S rRNA. May interact with the 5'-terminal helix region of 16S rRNA. In Anaeromyxobacter dehalogenans (strain 2CP-C), this protein is Ribosome-binding factor A.